The sequence spans 381 residues: MYG1 exonuclease (381 aa).

The transit peptide at 1–47 (MGRGFLRGVLTLLPLRSVLQVQHCMLVSEPDLPPKRPRNNLMAPPRI) directs the protein to the mitochondrion. N6-acetyllysine is present on residues K267 and K273.

This sequence belongs to the MYG1 family.

It is found in the nucleus. It localises to the nucleoplasm. The protein resides in the mitochondrion matrix. The protein localises to the nucleolus. In terms of biological role, 3'-5' RNA exonuclease which cleaves in situ on specific transcripts in both nucleus and mitochondrion. Involved in regulating spatially segregated organellar RNA processing, acts as a coordinator of nucleo-mitochondrial crosstalk. In nucleolus, processes pre-ribosomal RNA involved in ribosome assembly and alters cytoplasmic translation. In mitochondrial matrix, processes 3'-termini of the mito-ribosomal and messenger RNAs and controls translation of mitochondrial proteins. The protein is MYG1 exonuclease of Rattus norvegicus (Rat).